The primary structure comprises 1647 residues: Cortactin-binding protein 2 (1647 aa).

Disordered regions lie at residues 1–27, 202–222, 318–427, 440–468, and 482–604; these read MATD…AEAA, EKKK…RSTE, HVKK…QPGL, GNAN…RDNL, and LSRF…PSID. Positions 120 to 276 form a coiled coil; sequence KMQERMATQL…EQLKRGSDSK (157 aa). Over residues 362-372 the composition is skewed to low complexity; it reads SSAPSLPPASA. A compositionally biased stretch (polar residues) spans 379-388; it reads GPSTGSTADL. Residues 389–411 are compositionally biased toward low complexity; it reads PSSTAPAPGSAAQSPVAAALGPA. Residues 440 to 466 show a composition bias toward polar residues; that stretch reads GNANDPDQNGNTTQSPPSRDVSPTSRD. Residue Arg-484 is modified to Asymmetric dimethylarginine. Residues 488 to 509 are compositionally biased toward low complexity; that stretch reads PAVGAAPRPGAPPTGDAGAYPP. The span at 569–579 shows a compositional bias: polar residues; sequence TVASPPSSLPQ. ANK repeat units follow at residues 695–725, 729–758, 762–791, 795–824, and 828–857; these read GRPT…DINY, DGHS…QVNA, NGFT…NINH, GGQT…DRSV, and DGWT…PAHG. Residues 856-886 form a disordered region; that stretch reads HGNSLNEEEPESDVSDLDDGEESSEGESKPV. Residues 861–880 show a composition bias toward acidic residues; the sequence is NEEEPESDVSDLDDGEESSE. One copy of the ANK 6 repeat lies at 898–928; it reads EGWTAAHIAASKGFKNCLEILCRHRGLEPER. The interval 1436-1467 is disordered; that stretch reads ENGAWRKVNTSPRRKSGRFSSPTWNKPDLSNE. Ser-1509 carries the post-translational modification Phosphoserine. A disordered region spans residues 1542-1647; it reads RTFDSSGNNP…HKNEQTHRKT (106 aa). Polar residues-rich tracts occupy residues 1544-1559 and 1567-1584; these read FDSS…TVNN and KEVS…SNNK. Residues 1609-1623 show a composition bias toward low complexity; sequence SQNTKRSSSSSNTRQ. A compositionally biased stretch (basic and acidic residues) spans 1630 to 1647; that stretch reads SKEENWNLHKNEQTHRKT.

In terms of assembly, interacts with CTTN/cortactin SH3 domain. Interacts with STRN, STRN4/zinedin and MOB4/phocein; this interactions mediate the association with the STRIPAK core complex and may regulate dendritic spine distribution of the STRIPAK complex in hippocampal neurons. Activation of glutamate receptors weakens the interaction with STRN and STRN4.

The protein localises to the cytoplasm. Its subcellular location is the cell cortex. It localises to the cell projection. It is found in the dendritic spine. Functionally, regulates the dendritic spine distribution of CTTN/cortactin in hippocampal neurons, and thus controls dendritic spinogenesis and dendritic spine maintenance. Associates with the striatin-interacting phosphatase and kinase (STRIPAK) core complex to regulate dendritic spine distribution of the STRIPAK complex in hippocampal neurons. In Microcebus murinus (Gray mouse lemur), this protein is Cortactin-binding protein 2 (CTTNBP2).